Reading from the N-terminus, the 283-residue chain is Polyamine aminopropyltransferase (283 aa).

The PABS domain maps to 5-238 (PTWIDEYHKG…GIWSWTFASD (234 aa)). An S-methyl-5'-thioadenosine-binding site is contributed by Gln-32. Spermidine-binding residues include His-63 and Asp-87. Residues Glu-107 and 139-140 (DG) each bind S-methyl-5'-thioadenosine. Asp-158 acts as the Proton acceptor in catalysis. 158–161 (DCSD) lines the spermidine pocket.

It belongs to the spermidine/spermine synthase family. As to quaternary structure, homodimer or homotetramer.

It localises to the cytoplasm. The catalysed reaction is S-adenosyl 3-(methylsulfanyl)propylamine + putrescine = S-methyl-5'-thioadenosine + spermidine + H(+). It functions in the pathway amine and polyamine biosynthesis; spermidine biosynthesis; spermidine from putrescine: step 1/1. Functionally, catalyzes the irreversible transfer of a propylamine group from the amino donor S-adenosylmethioninamine (decarboxy-AdoMet) to putrescine (1,4-diaminobutane) to yield spermidine. This is Polyamine aminopropyltransferase from Prochlorococcus marinus subsp. pastoris (strain CCMP1986 / NIES-2087 / MED4).